Reading from the N-terminus, the 951-residue chain is MADSDDEYDRKRRDKFRGERESYRTERRDERRPIGGAGGGRDEWSERNPFRGGGAGGGGAPRHRPDYSDYRGPGPRARYGSPVRDMPPPKRMRSDWGDGDGRPGPRYGGYDPYLMQAWTDHYQSMHSAYHHASHPPPVRELPIIGGDTLTQPAMLNLKQFLDTQDENISDSEVMRKYTEYKTDFKRQQLNEFFVAHKDEEWFKNKYHPEDSVNRSEEQRGFLRRRTDVFVELLENGTIGSVKVDSSHGDALIRVLDTCVIKLEGGTDEDLKVLDEKPKEALVFDRKPESVDPTTVVENTPKSPKKEKEEDELPLIVSPQRIALKPVNSDDENWDDAEVEDAPPKKPEEEEPKESEPIPEIKQKQKKEKKKKIKKRKRNSSSDEESSSSESESSSSSSEEEEEDDEKLKAKYDVEDGLRAEQKAEAEKDQAEAAKAKLGSVSPKEEISPEKSAADPEVEGEAKEDGKQAEKSPKSDDEKKQENGDAAKVESAAEPATGDAQGEVKPVTIDLDKVNPPRDMHRTSSIFLRNLAPSITKAEIEALCSRFSGYLRTAIADPLVERRWYRRGWITFTRDVNIKEICWSLNNQRLRDCEMGAIVNRDLSRRVRPANGITAHKQVVRSDIKLCARIVMNLDEKFKLWSEGPLSKPSPASDSEATAANGSGSSYGFNSKNPVLQNITDYLIEEASAEEEELLGLSGDRKDGEGEPIERDEQLLSVLDRLVLYLRIVHSVDYYNHCEYPYEDEMPNRCGIIHARGPAPSRVTSNELNEYIKSYEGKLLQFLTKTALLSEDQIKDLGAKNADTEVEKFVQANTQELAKDKWLCPLSGKKFKGPEFIRKHIFNKHEEKVDEVRKEVQYFNNYLRDPKRPQLPEHPGSVKRPETESVRGPGGYRPPMYTPMSGMPYSFGGHMMGGGRGGRHFPPARRELPLEHHRRLVGYHDLDAPSNSDIFD.

4 disordered regions span residues 1-108 (MADS…PRYG), 283-515 (FDRK…KVNP), 644-664 (PLSK…GSGS), and 864-893 (DPKR…GYRP). Basic and acidic residues-rich tracts occupy residues 8–33 (YDRK…ERRP) and 40–49 (GRDEWSERNP). The span at 51–60 (RGGGAGGGGA) shows a compositional bias: gly residues. Phosphotyrosine is present on Tyr79. Ser81 is modified (phosphoserine). A compositionally biased stretch (basic and acidic residues) spans 92 to 103 (MRSDWGDGDGRP). A Phosphothreonine modification is found at Thr299. Phosphoserine occurs at positions 302, 328, and 354. Acidic residues predominate over residues 328-340 (SDDENWDDAEVED). Residues 341–362 (APPKKPEEEEPKESEPIPEIKQ) are compositionally biased toward basic and acidic residues. The segment covering 363 to 378 (KQKKEKKKKIKKRKRN) has biased composition (basic residues). Residues 387–396 (SSESESSSSS) are compositionally biased toward low complexity. The span at 405 to 434 (EKLKAKYDVEDGLRAEQKAEAEKDQAEAAK) shows a compositional bias: basic and acidic residues. At Ser441 the chain carries Phosphoserine. Positions 442–487 (PKEEISPEKSAADPEVEGEAKEDGKQAEKSPKSDDEKKQENGDAAK) are enriched in basic and acidic residues. Positions 649–664 (SPASDSEATAANGSGS) are enriched in polar residues.

The protein belongs to the ARS2 family. In terms of assembly, interacts with cbp20, Dcr-2 and pasha.

The protein resides in the nucleus. In terms of biological role, acts as a mediator between the cap-binding complex (CBC) and RNA-mediated gene silencing (RNAi). Involved in innate immunity via the short interfering RNAs (siRNAs) processing machinery by restricting the viral RNA production. Also involved microRNA (miRNA)-mediated silencing by contributing to the stability and delivery of primary miRNA transcripts to the primary miRNA processing complex containing drosha and pasha. The sequence is that of Serrate RNA effector molecule homolog (Ars2) from Drosophila persimilis (Fruit fly).